Reading from the N-terminus, the 517-residue chain is Histone H4 transcription factor (517 aa).

3 consecutive C2H2-type zinc fingers follow at residues 15–39 (LQCE…VTQH), 129–153 (FLCL…VEAH), and 169–193 (VLCG…LRSH). The segment at 199–221 (VACPTCGGMFANNTKFLDHIRRQ) adopts a C2H2-type 4; degenerate zinc-finger fold. 5 consecutive C2H2-type zinc fingers follow at residues 229–251 (FQCS…MRNH), 255–278 (YKCP…RFRH), 284–306 (FKCD…LDTH), 312–337 (YRCD…RKVH), and 345–368 (YKCH…RKKH). The tract at residues 373–517 (PSGHPRFRYK…IAEEPEIQMV (145 aa)) is interaction with NPAT. The required for activation of histone H4 transcription and contributes to DNA-binding stretch occupies residues 374–407 (SGHPRFRYKEHEDGYMRLQLVRYESVELTQQLLR). A disordered region spans residues 431 to 460 (TVPGEPGRKEEEEEGKGSEGTALSASQDNP). The span at 451-460 (TALSASQDNP) shows a compositional bias: polar residues.

Binds MBD2 and a histone deacetylase complex. Interacts with NPAT. Ubiquitinated. Ubiquitination may lead to proteasome-mediated degradation. Ubiquitous. Highly expressed in brain, heart, skeletal muscle, spleen, kidney, small intestine, placenta and liver.

It localises to the nucleus. Transcriptional repressor that binds to the consensus sequence 5'-CGGACGTT-3' and to the RB1 promoter. Transcriptional activator that promotes histone H4 gene transcription at the G1/S phase transition in conjunction with NPAT. Also activates transcription of the ATM and PRKDC genes. Autoregulates its expression by associating with its own promoter. The polypeptide is Histone H4 transcription factor (HINFP) (Homo sapiens (Human)).